Consider the following 718-residue polypeptide: DNA ligase (718 aa).

Residues 44-48 (DADYD), 93-94 (SL), and glutamate 127 each bind NAD(+). Catalysis depends on lysine 129, which acts as the N6-AMP-lysine intermediate. Positions 150, 186, 302, and 326 each coordinate NAD(+). Zn(2+)-binding residues include cysteine 432, cysteine 435, cysteine 456, and cysteine 462. A BRCT domain is found at 640–718 (TAGSPVAGKT…EDQWLALISG (79 aa)).

Belongs to the NAD-dependent DNA ligase family. LigA subfamily. Mg(2+) is required as a cofactor. Requires Mn(2+) as cofactor.

The catalysed reaction is NAD(+) + (deoxyribonucleotide)n-3'-hydroxyl + 5'-phospho-(deoxyribonucleotide)m = (deoxyribonucleotide)n+m + AMP + beta-nicotinamide D-nucleotide.. DNA ligase that catalyzes the formation of phosphodiester linkages between 5'-phosphoryl and 3'-hydroxyl groups in double-stranded DNA using NAD as a coenzyme and as the energy source for the reaction. It is essential for DNA replication and repair of damaged DNA. The sequence is that of DNA ligase from Rhizobium johnstonii (strain DSM 114642 / LMG 32736 / 3841) (Rhizobium leguminosarum bv. viciae).